Reading from the N-terminus, the 248-residue chain is Ribosomal RNA small subunit methyltransferase G (248 aa).

The disordered stretch occupies residues 1–23 (MFHVKHVGPVEPAAGDPEVPPVA). Residues Gly93, Leu98, 143-144 (AE), and Arg161 contribute to the S-adenosyl-L-methionine site. Positions 226 to 248 (VVSARRAKPPHPKSARTGKAGTR) are disordered. Basic residues predominate over residues 230 to 248 (RRAKPPHPKSARTGKAGTR).

Belongs to the methyltransferase superfamily. RNA methyltransferase RsmG family.

The protein localises to the cytoplasm. Specifically methylates the N7 position of guanine in position 518 of 16S rRNA. This Mycolicibacterium paratuberculosis (strain ATCC BAA-968 / K-10) (Mycobacterium paratuberculosis) protein is Ribosomal RNA small subunit methyltransferase G.